Reading from the N-terminus, the 216-residue chain is Probable GTP-binding protein EngB (216 aa).

In terms of domain architecture, EngB-type G spans 30–204 (DGLEVAFAGR…HDVLARWLGL (175 aa)). GTP contacts are provided by residues 38 to 45 (GRSNAGKS), 64 to 68 (GRTQL), 82 to 85 (DLPG), 149 to 152 (TKAD), and 182 to 185 (LFSA). Residues S45 and T66 each contribute to the Mg(2+) site.

The protein belongs to the TRAFAC class TrmE-Era-EngA-EngB-Septin-like GTPase superfamily. EngB GTPase family. Requires Mg(2+) as cofactor.

Its function is as follows. Necessary for normal cell division and for the maintenance of normal septation. This is Probable GTP-binding protein EngB from Azotobacter vinelandii (strain DJ / ATCC BAA-1303).